We begin with the raw amino-acid sequence, 408 residues long: Dual-specificity RNA methyltransferase RlmN (408 aa).

Residue Glu120 is the Proton acceptor of the active site. The Radical SAM core domain occupies 126 to 375 (EEGRGTLCIS…IRTPRGRDIL (250 aa)). A disulfide bond links Cys133 and Cys378. The [4Fe-4S] cluster site is built by Cys140, Cys144, and Cys147. S-adenosyl-L-methionine contacts are provided by residues 204 to 205 (GE), Ser236, 258 to 260 (SLH), and Asn335. The active-site S-methylcysteine intermediate is Cys378.

Belongs to the radical SAM superfamily. RlmN family. The cofactor is [4Fe-4S] cluster.

The protein resides in the cytoplasm. It carries out the reaction adenosine(2503) in 23S rRNA + 2 reduced [2Fe-2S]-[ferredoxin] + 2 S-adenosyl-L-methionine = 2-methyladenosine(2503) in 23S rRNA + 5'-deoxyadenosine + L-methionine + 2 oxidized [2Fe-2S]-[ferredoxin] + S-adenosyl-L-homocysteine. The enzyme catalyses adenosine(37) in tRNA + 2 reduced [2Fe-2S]-[ferredoxin] + 2 S-adenosyl-L-methionine = 2-methyladenosine(37) in tRNA + 5'-deoxyadenosine + L-methionine + 2 oxidized [2Fe-2S]-[ferredoxin] + S-adenosyl-L-homocysteine. Functionally, specifically methylates position 2 of adenine 2503 in 23S rRNA and position 2 of adenine 37 in tRNAs. m2A2503 modification seems to play a crucial role in the proofreading step occurring at the peptidyl transferase center and thus would serve to optimize ribosomal fidelity. The polypeptide is Dual-specificity RNA methyltransferase RlmN (Rhizobium johnstonii (strain DSM 114642 / LMG 32736 / 3841) (Rhizobium leguminosarum bv. viciae)).